The chain runs to 475 residues: 1-aminocyclopropane-1-carboxylate synthase CMA101 (475 aa).

An N6-(pyridoxal phosphate)lysine modification is found at Lys272.

It belongs to the class-I pyridoxal-phosphate-dependent aminotransferase family. As to quaternary structure, homodimer. Requires pyridoxal 5'-phosphate as cofactor.

The catalysed reaction is S-adenosyl-L-methionine = 1-aminocyclopropane-1-carboxylate + S-methyl-5'-thioadenosine + H(+). It functions in the pathway alkene biosynthesis; ethylene biosynthesis via S-adenosyl-L-methionine; ethylene from S-adenosyl-L-methionine: step 1/2. In terms of biological role, catalyzes the formation of 1-aminocyclopropane-1-carboxylate, a direct precursor of ethylene in higher plants. In Cucurbita maxima (Pumpkin), this protein is 1-aminocyclopropane-1-carboxylate synthase CMA101 (ACS2).